We begin with the raw amino-acid sequence, 304 residues long: Peroxisomal membrane protein 13 (304 aa).

Disordered stretches follow at residues 1–78 and 258–304; these read MASQ…WEQQ and PRKM…VWGN. Polar residues-rich tracts occupy residues 19 to 44 and 56 to 67; these read NTSGPNPFRPPSNTSTAGSVEASGTA and RPNTAANMNSLS. Positions 262 to 279 are enriched in low complexity; sequence QQPPQGPNGLPLPHQPHG.

It belongs to the peroxin-13 family. In terms of assembly, interacts with PEX14; forming the PEX13-PEX14 docking complex. Interacts (via N-terminus) with PEX7, but not with PEX5. Interacts with APEM9 (via N-terminus). In terms of tissue distribution, highly expressed in pollen. Detected in shoots, roots, stems, leaves, inflorescences and emasculated postils. Strongly expressed in both male and female gametophytes during fertilization.

It localises to the peroxisome membrane. Component of the PEX13-PEX14 docking complex, a translocon channel that specifically mediates the import of peroxisomal cargo proteins bound to PEX5 receptor. The PEX13-PEX14 docking complex forms a large import pore which can be opened to a diameter of about 9 nm. Mechanistically, PEX5 receptor along with cargo proteins associates with the PEX14 subunit of the PEX13-PEX14 docking complex in the cytosol, leading to the insertion of the receptor into the organelle membrane with the concomitant translocation of the cargo into the peroxisome matrix. Essential for pollen-tube discharge that take place only in the presence of functional peroxisomes in either the male or the female gametophyte. This chain is Peroxisomal membrane protein 13, found in Arabidopsis thaliana (Mouse-ear cress).